Reading from the N-terminus, the 59-residue chain is Large ribosomal subunit protein bL32 (59 aa).

Positions 1–16 (MAVPKRKTSPSKRGMR) are enriched in basic residues. The segment at 1 to 41 (MAVPKRKTSPSKRGMRRSADALKAPTYIEDKNSGELRRPHH) is disordered. Residues 28-41 (IEDKNSGELRRPHH) show a composition bias toward basic and acidic residues.

The protein belongs to the bacterial ribosomal protein bL32 family.

The sequence is that of Large ribosomal subunit protein bL32 from Bartonella henselae (strain ATCC 49882 / DSM 28221 / CCUG 30454 / Houston 1) (Rochalimaea henselae).